Here is a 541-residue protein sequence, read N- to C-terminus: uncharacterized protein (541 aa).

The protein localises to the virion. This is an uncharacterized protein from Acanthamoeba polyphaga mimivirus (APMV).